Here is a 448-residue protein sequence, read N- to C-terminus: Methionine aminopeptidase 2 (448 aa).

Low complexity predominate over residues 1–17 (MPATAEAADAATQATDA). The interval 1-87 (MPATAEAADA…QTEPPSIGLT (87 aa)) is disordered. Residues 21-34 (KLEENKLPEGQERG) are compositionally biased toward basic and acidic residues. Acidic residues predominate over residues 35-46 (PEEEEDDDDDET). Basic residues predominate over residues 55–71 (KKKKKKKSGAKKKKSKT). H200 is a binding site for substrate. A divalent metal cation-binding residues include D220, D231, and H300. H308 serves as a coordination point for substrate. The a divalent metal cation site is built by E334 and E429.

It belongs to the peptidase M24A family. Methionine aminopeptidase eukaryotic type 2 subfamily. The cofactor is Co(2+). It depends on Zn(2+) as a cofactor. Requires Mn(2+) as cofactor. Fe(2+) serves as cofactor.

It is found in the cytoplasm. It carries out the reaction Release of N-terminal amino acids, preferentially methionine, from peptides and arylamides.. Functionally, cotranslationally removes the N-terminal methionine from nascent proteins. The N-terminal methionine is often cleaved when the second residue in the primary sequence is small and uncharged (Met-Ala-, Cys, Gly, Pro, Ser, Thr, or Val). This chain is Methionine aminopeptidase 2, found in Malassezia globosa (strain ATCC MYA-4612 / CBS 7966) (Dandruff-associated fungus).